Consider the following 205-residue polypeptide: Adenylyl-sulfate kinase (205 aa).

31–38 contributes to the ATP binding site; that stretch reads GLSGAGKS. S105 functions as the Phosphoserine intermediate in the catalytic mechanism.

This sequence belongs to the APS kinase family.

It carries out the reaction adenosine 5'-phosphosulfate + ATP = 3'-phosphoadenylyl sulfate + ADP + H(+). The protein operates within sulfur metabolism; hydrogen sulfide biosynthesis; sulfite from sulfate: step 2/3. In terms of biological role, catalyzes the synthesis of activated sulfate. The protein is Adenylyl-sulfate kinase of Shewanella baltica (strain OS195).